The chain runs to 292 residues: ATP synthase gamma chain (292 aa).

It belongs to the ATPase gamma chain family. In terms of assembly, F-type ATPases have 2 components, CF(1) - the catalytic core - and CF(0) - the membrane proton channel. CF(1) has five subunits: alpha(3), beta(3), gamma(1), delta(1), epsilon(1). CF(0) has three main subunits: a, b and c.

The protein localises to the cell inner membrane. Produces ATP from ADP in the presence of a proton gradient across the membrane. The gamma chain is believed to be important in regulating ATPase activity and the flow of protons through the CF(0) complex. The protein is ATP synthase gamma chain of Bradyrhizobium sp. (strain ORS 278).